Consider the following 634-residue polypeptide: Tyrosine-protein kinase transforming protein erbB (634 aa).

The Protein kinase domain occupies 132 to 399 (FKKVKVLGSG…KMARDPPRYL (268 aa)). ATP contacts are provided by residues 138 to 146 (LGSGAFGTV) and Lys-165. The active-site Proton acceptor is the Asp-257.

Belongs to the protein kinase superfamily. Tyr protein kinase family. EGF receptor subfamily.

The catalysed reaction is L-tyrosyl-[protein] + ATP = O-phospho-L-tyrosyl-[protein] + ADP + H(+). This is Tyrosine-protein kinase transforming protein erbB (V-ERBB) from Avian leukosis virus (ALV).